A 380-amino-acid chain; its full sequence is Flap endonuclease 1 (380 aa).

The tract at residues 1–104 (MGIKGLSQLI…GELTKRAEKR (104 aa)) is N-domain. A Mg(2+)-binding site is contributed by Asp-34. 2 residues coordinate DNA: Arg-47 and Arg-70. Mg(2+) is bound by residues Asp-86, Glu-158, Glu-160, Asp-179, and Asp-181. An I-domain region spans residues 122 to 253 (DIDKFNRRLV…KKAVELINKH (132 aa)). Glu-158 provides a ligand contact to DNA. The DNA site is built by Gly-231 and Asp-233. Residue Asp-233 participates in Mg(2+) binding. The interval 336 to 344 (TQGRLDSFF) is interaction with PCNA. Positions 342–380 (SFFKVLPSTPNPKRKIEDKKTPASKKAKTTGGKPGRKPK) are disordered. Residues 363-380 (PASKKAKTTGGKPGRKPK) show a composition bias toward basic residues.

Belongs to the XPG/RAD2 endonuclease family. FEN1 subfamily. As to quaternary structure, interacts with PCNA. Three molecules of FEN1 bind to one PCNA trimer with each molecule binding to one PCNA monomer. PCNA stimulates the nuclease activity without altering cleavage specificity. It depends on Mg(2+) as a cofactor. Post-translationally, phosphorylated. Phosphorylation upon DNA damage induces relocalization to the nuclear plasma.

The protein resides in the nucleus. The protein localises to the nucleolus. It localises to the nucleoplasm. Its subcellular location is the mitochondrion. In terms of biological role, structure-specific nuclease with 5'-flap endonuclease and 5'-3' exonuclease activities involved in DNA replication and repair. During DNA replication, cleaves the 5'-overhanging flap structure that is generated by displacement synthesis when DNA polymerase encounters the 5'-end of a downstream Okazaki fragment. It enters the flap from the 5'-end and then tracks to cleave the flap base, leaving a nick for ligation. Also involved in the long patch base excision repair (LP-BER) pathway, by cleaving within the apurinic/apyrimidinic (AP) site-terminated flap. Acts as a genome stabilization factor that prevents flaps from equilibrating into structures that lead to duplications and deletions. Also possesses 5'-3' exonuclease activity on nicked or gapped double-stranded DNA, and exhibits RNase H activity. Also involved in replication and repair of rDNA and in repairing mitochondrial DNA. This is Flap endonuclease 1 from Aedes aegypti (Yellowfever mosquito).